A 409-amino-acid polypeptide reads, in one-letter code: LysM domain-containing GPI-anchored protein LYP6 (409 aa).

The signal sequence occupies residues 1-27 (MAGWPAAEAAGALVVAILAAAAGGAAG). Cystine bridges form between cysteine 34-cysteine 100, cysteine 40-cysteine 166, cysteine 98-cysteine 164, and cysteine 100-cysteine 166. Residues 110–160 (VRYSARPADTLASVADVVFAGLASADQIRTANGLSAEDPDAPLDAGATLVV) form the LysM 1 domain. N-linked (GlcNAc...) asparagine glycosylation is present at asparagine 168. The region spanning 179 to 222 (LSYVVRVGDTVQSIAATHATTVTDISNVNAMGSPIVAPGDILAI) is the LysM 2 domain. Disulfide bonds link cysteine 227–cysteine 259 and cysteine 254–cysteine 282. Asparagine 244 carries an N-linked (GlcNAc...) asparagine glycan. 3 N-linked (GlcNAc...) asparagine glycosylation sites follow: asparagine 291, asparagine 302, and asparagine 313. The segment at 353–387 (SPAPGAGEAGGDIPGFPGSSNVSPANGPSGSVSQA) is disordered. Polar residues predominate over residues 370-387 (GSSNVSPANGPSGSVSQA). A lipid anchor (GPI-anchor amidated alanine) is attached at alanine 387. The propeptide at 388–409 (ASVNRPHQIVALILSVALYFQM) is removed in mature form.

In terms of assembly, interacts with LYP4. Interacts with CERK1. Interacts with CEBIP. As to expression, expressed in roots and leaves.

Its subcellular location is the cell membrane. In terms of biological role, functions in innate immunity. Functions as a pattern recognition receptor (PRR), sensing bacterial peptidoglycan (PGN) and fungal chitin at the cell surface. Involved in resistance against the bacterial pathogen Xanthomonas oryzae pv. oryzae (Xoo) and the fungal pathogen Magnaporthe oryzae. Binds PGN and fungal chitin in vitro. Involved in microbe-associated molecular patterns (MAMPs) perception and participates in the activation of defense genes against the bacterial pathogen Xanthomonas oryzae pv. oryzicola (Xoc) or the fungal pathogen Magnaporthe oryzae. The chain is LysM domain-containing GPI-anchored protein LYP6 from Oryza sativa subsp. japonica (Rice).